A 245-amino-acid polypeptide reads, in one-letter code: NAD(P)H-quinone oxidoreductase subunit K (245 aa).

4 residues coordinate [4Fe-4S] cluster: Cys-58, Cys-59, Cys-123, and Cys-154. A disordered region spans residues 210-245 (SDTRSAPPKELAEAIGMPIPPALLTEKAQKEEQTRG). A compositionally biased stretch (basic and acidic residues) spans 236-245 (KAQKEEQTRG).

This sequence belongs to the complex I 20 kDa subunit family. As to quaternary structure, NDH-1 can be composed of about 15 different subunits; different subcomplexes with different compositions have been identified which probably have different functions. Requires [4Fe-4S] cluster as cofactor.

The protein resides in the cellular thylakoid membrane. The enzyme catalyses a plastoquinone + NADH + (n+1) H(+)(in) = a plastoquinol + NAD(+) + n H(+)(out). It carries out the reaction a plastoquinone + NADPH + (n+1) H(+)(in) = a plastoquinol + NADP(+) + n H(+)(out). Its function is as follows. NDH-1 shuttles electrons from an unknown electron donor, via FMN and iron-sulfur (Fe-S) centers, to quinones in the respiratory and/or the photosynthetic chain. The immediate electron acceptor for the enzyme in this species is believed to be plastoquinone. Couples the redox reaction to proton translocation, and thus conserves the redox energy in a proton gradient. Cyanobacterial NDH-1 also plays a role in inorganic carbon-concentration. In Nostoc punctiforme (strain ATCC 29133 / PCC 73102), this protein is NAD(P)H-quinone oxidoreductase subunit K.